The following is a 572-amino-acid chain: Formate--tetrahydrofolate ligase (572 aa).

Position 65–72 (65–72 (TPLGEGKT)) interacts with ATP.

The protein belongs to the formate--tetrahydrofolate ligase family.

It catalyses the reaction (6S)-5,6,7,8-tetrahydrofolate + formate + ATP = (6R)-10-formyltetrahydrofolate + ADP + phosphate. It functions in the pathway one-carbon metabolism; tetrahydrofolate interconversion. This Chloroflexus aurantiacus (strain ATCC 29366 / DSM 635 / J-10-fl) protein is Formate--tetrahydrofolate ligase.